The sequence spans 278 residues: Soluble NSF attachment protein homolog FPV011 (278 aa).

It belongs to the SNAP family.

This is Soluble NSF attachment protein homolog FPV011 from Fowlpox virus (strain NVSL) (FPV).